The sequence spans 283 residues: MPTDMQDVKDIVREKYASAALKVATGGASCCGSSALPGASPITSNLYDAAQEQGLPAEAMLASLGCGNPTALAQLSPGETVLDLGSGGGIDVLLSARRVGPTGKAYGLDMTDEMLALARDNQRKAGLDNVEFLKGEIEAIPLPDHSVDVIISNCVINLSGDKDRVLREAFRVLKPGGRFAVSDVVTRGEIPEALRRDVLLWVGCLAGALDEADYVAKLAAAGFAQISIEPTRVYDIEDAREFLTGKGIDVDALAPQMQDKFFSGFVRATKPGADGEVPARCCG.

The protein belongs to the methyltransferase superfamily. Arsenite methyltransferase family.

The catalysed reaction is arsenic triglutathione + [thioredoxin]-dithiol + S-adenosyl-L-methionine + 2 H2O = methylarsonous acid + [thioredoxin]-disulfide + 3 glutathione + S-adenosyl-L-homocysteine + H(+). It carries out the reaction arsenic triglutathione + 2 [thioredoxin]-dithiol + 2 S-adenosyl-L-methionine + H2O = dimethylarsinous acid + 2 [thioredoxin]-disulfide + 3 glutathione + 2 S-adenosyl-L-homocysteine + 2 H(+). It catalyses the reaction arsenic triglutathione + 3 [thioredoxin]-dithiol + 3 S-adenosyl-L-methionine = trimethylarsine + 3 [thioredoxin]-disulfide + 3 glutathione + 3 S-adenosyl-L-homocysteine + 3 H(+). Its function is as follows. Catalyzes the transfer of a methyl group from AdoMet to arsenite, producing methylated arsenicals. Involved in the conversion of As(III) to a number of di- and trimethylated species, with trimethylarsine as the end product. Reduces the arsenic toxicity in the cell and may contribute to the global arsenic cycling. This is Arsenite methyltransferase from Rhodopseudomonas palustris (strain ATCC BAA-98 / CGA009).